A 781-amino-acid polypeptide reads, in one-letter code: Mitogen-activated protein kinase 7 (781 aa).

The interval 1-27 (MAEPLKEDDGEDGSGEPPGPVKAEPAG) is disordered. Alanine 2 carries the N-acetylalanine modification. The tract at residues 2–77 (AEPLKEDDGE…VVSSARRRLT (76 aa)) is required for cytoplasmic targeting. The 293-residue stretch at 55–347 (YEIIETIGNG…AAAALRHPFL (293 aa)) folds into the Protein kinase domain. Residues 61 to 69 (IGNGAYGVV) and lysine 84 contribute to the ATP site. A required for binding to MAP2K5 region spans residues 78 to 139 (GQQVAIKKIP…FKSVYVVLDL (62 aa)). The tract at residues 140–406 (MESDLHQIIH…QQIRFQPSLQ (267 aa)) is necessary for oligomerization. Catalysis depends on aspartate 182, which acts as the Proton acceptor. The TXY motif lies at 219–221 (TEY). Residues 402 to 708 (QPSLQPVASE…PKGSGAGYGV (307 aa)) are disordered. Residues 407 to 781 (PVASEPGCPD…LADLPDLQEP (375 aa)) are may not be required for kinase activity; required to stimulate MEF2C activity. 2 stretches are compositionally biased toward pro residues: residues 433–445 (SPPP…PGPA) and 454–463 (QPPPPASEPA). A compositionally biased stretch (low complexity) spans 476 to 486 (KAALKAALLKS). Basic and acidic residues-rich tracts occupy residues 502–519 (PEPR…EREE), 527–544 (RAKE…KERG), and 563–573 (DNDRSLLERWT). A Nuclear localization signal motif is present at residues 505 to 539 (RKPVTAQERQREREEKRRRRQERAKEREKRRQERE). 2 stretches are compositionally biased toward pro residues: residues 578-594 (PPAP…PPAG) and 601-614 (GPLP…PAPA). 2 stretches are compositionally biased toward low complexity: residues 615–632 (AGPA…LAPQ) and 642–652 (GPSALSVLPYF). Positions 653 to 664 (PSGPPPPDPGGA) are enriched in pro residues. Over residues 668–685 (STSESPDVTLVTQQLSKS) the composition is skewed to polar residues. A Phosphoserine modification is found at serine 685. A Phosphothreonine modification is found at threonine 698.

This sequence belongs to the protein kinase superfamily. CMGC Ser/Thr protein kinase family. MAP kinase subfamily. As to quaternary structure, interacts with MAP2K5. Forms oligomers. Interacts with MEF2A, MEF2C and MEF2D; the interaction phosphorylates the MEF2s and enhances transcriptional activity of MEF2A, MEF2C but not MEF2D. Interacts with SGK1. Interacts with PML. Interacts (via N-terminal half) with HSP90AB1-CDC37 chaperone complex in resting cells; the interaction is MAP2K5-independent and prevents MAPK7 from ubiquitination and proteasomal degradation. Interacts with STUB1/CHIP; the interaction is enhanced in the presence of IGF1 or MAP2K5 and promotes STUB1/CHIP E3 ligase activity. Mg(2+) is required as a cofactor. Post-translationally, dually phosphorylated on Thr-219 and Tyr-221, which activates the enzyme.

The protein resides in the cytoplasm. It localises to the nucleus. Its subcellular location is the PML body. It catalyses the reaction L-seryl-[protein] + ATP = O-phospho-L-seryl-[protein] + ADP + H(+). The catalysed reaction is L-threonyl-[protein] + ATP = O-phospho-L-threonyl-[protein] + ADP + H(+). Its activity is regulated as follows. Activated by tyrosine and threonine phosphorylation. Activated in response to hyperosmolarity, hydrogen peroxide, and epidermal growth factor (EGF). Plays a role in various cellular processes such as proliferation, differentiation and cell survival. The upstream activator of MAPK7 is the MAPK kinase MAP2K5. Upon activation, it translocates to the nucleus and phosphorylates various downstream targets including MEF2C. EGF activates MAPK7 through a Ras-independent and MAP2K5-dependent pathway. As part of the MAPK/ERK signaling pathway, acts as a negative regulator of apoptosis in cardiomyocytes via interaction with STUB1/CHIP and promotion of STUB1-mediated ubiquitination and degradation of ICER-type isoforms of CREM. May have a role in muscle cell differentiation. May be important for endothelial function and maintenance of blood vessel integrity. MAP2K5 and MAPK7 interact specifically with one another and not with MEK1/ERK1 or MEK2/ERK2 pathways. Phosphorylates SGK1 at Ser-78 and this is required for growth factor-induced cell cycle progression. Involved in the regulation of p53/TP53 by disrupting the PML-MDM2 interaction. The chain is Mitogen-activated protein kinase 7 (MAPK7) from Bos taurus (Bovine).